A 427-amino-acid polypeptide reads, in one-letter code: MGRGGDSSGQAHPAAELAVPSDRAEVSNADSKALHIVLYGKRVDVTKFQRTHPGGSKVFRIFQDRDATEQFESYHSKRAIKMMEGMLKKSEDAPADTPLPSQSPMGKDFKAMIERHVAAGYYDPCPLDELFKLSLVLLPTFAGMYMLKAGVGSPLCGALMVSFGWYLDGWLAHDYLHHSVFKGSVARTVGWNNAAGYFLGFVQGYAVEWWRARHNTHHVCTNEDGSDPDIKTAPLLIYVRNKPSIAKRLNAFQRYQQYYYVPVMAILDLYWRLESIAYVAMRLPKMLPQALALVAHYAIVAWVFAGNYHLLPLVTVLRGFGTGITVFATHYGEDILDADQVRHMTLVEQTALTSRNISGGWLVNVLTGFISLQTEHHLFPMMPTGNLMTIQPEVRAFFKKHGLEYREGNLIECVRQNIRALAFEHLL.

The interval 1 to 24 (MGRGGDSSGQAHPAAELAVPSDRA) is disordered. The region spanning 36 to 84 (IVLYGKRVDVTKFQRTHPGGSKVFRIFQDRDATEQFESYHSKRAIKMME) is the Cytochrome b5 heme-binding domain. Positions 52 and 75 each coordinate heme. The Histidine box-1 signature appears at 178-182 (HSVFK). The helical transmembrane segment at 189-209 (VGWNNAAGYFLGFVQGYAVEW) threads the bilayer. The Histidine box-2 signature appears at 213–218 (RHNTHH). The next 2 helical transmembrane spans lie at 261 to 281 (VPVM…YVAM) and 286 to 306 (MLPQ…VFAG). A Histidine box-3 motif is present at residues 373–377 (QTEHH).

The protein belongs to the fatty acid desaturase type 1 family. It depends on Fe(2+) as a cofactor.

Its subcellular location is the membrane. In terms of biological role, fatty acid desaturase that introduces a cis double bond at the 8-position in 20-carbon polyunsaturated fatty acids incorporated in a glycerolipid that contain a Delta(8) double bond to yield (20:4(8,11,14,17)). In Rebecca salina (Marine microalga), this protein is Acyl-lipid 8-desaturase.